A 244-amino-acid polypeptide reads, in one-letter code: 1-(5-phosphoribosyl)-5-[(5-phosphoribosylamino)methylideneamino] imidazole-4-carboxamide isomerase (244 aa).

The active-site Proton acceptor is the Asp-10. Asp-129 (proton donor) is an active-site residue.

This sequence belongs to the HisA/HisF family.

It localises to the cytoplasm. It catalyses the reaction 1-(5-phospho-beta-D-ribosyl)-5-[(5-phospho-beta-D-ribosylamino)methylideneamino]imidazole-4-carboxamide = 5-[(5-phospho-1-deoxy-D-ribulos-1-ylimino)methylamino]-1-(5-phospho-beta-D-ribosyl)imidazole-4-carboxamide. The protein operates within amino-acid biosynthesis; L-histidine biosynthesis; L-histidine from 5-phospho-alpha-D-ribose 1-diphosphate: step 4/9. The polypeptide is 1-(5-phosphoribosyl)-5-[(5-phosphoribosylamino)methylideneamino] imidazole-4-carboxamide isomerase (Rhodococcus erythropolis (strain PR4 / NBRC 100887)).